We begin with the raw amino-acid sequence, 145 residues long: D-aminoacyl-tRNA deacylase (145 aa).

The Gly-cisPro motif, important for rejection of L-amino acids signature appears at 137 to 138; that stretch reads GP.

It belongs to the DTD family. As to quaternary structure, homodimer.

The protein localises to the cytoplasm. The catalysed reaction is glycyl-tRNA(Ala) + H2O = tRNA(Ala) + glycine + H(+). It carries out the reaction a D-aminoacyl-tRNA + H2O = a tRNA + a D-alpha-amino acid + H(+). Its function is as follows. An aminoacyl-tRNA editing enzyme that deacylates mischarged D-aminoacyl-tRNAs. Also deacylates mischarged glycyl-tRNA(Ala), protecting cells against glycine mischarging by AlaRS. Acts via tRNA-based rather than protein-based catalysis; rejects L-amino acids rather than detecting D-amino acids in the active site. By recycling D-aminoacyl-tRNA to D-amino acids and free tRNA molecules, this enzyme counteracts the toxicity associated with the formation of D-aminoacyl-tRNA entities in vivo and helps enforce protein L-homochirality. The chain is D-aminoacyl-tRNA deacylase from Shigella dysenteriae serotype 1 (strain Sd197).